The following is a 190-amino-acid chain: Transcription antitermination protein NusB (190 aa).

Residues 135–190 (APAPESVAEEADEESSDSAAAASEPTDEGDVSDSPDSSGASDEPAAPSAEIQPTVD) form a disordered region. A compositionally biased stretch (acidic residues) spans 141–150 (VAEEADEESS).

The protein belongs to the NusB family.

Functionally, involved in transcription antitermination. Required for transcription of ribosomal RNA (rRNA) genes. Binds specifically to the boxA antiterminator sequence of the ribosomal RNA (rrn) operons. The polypeptide is Transcription antitermination protein NusB (Bifidobacterium longum (strain DJO10A)).